A 399-amino-acid chain; its full sequence is Replication-associated protein ORF4 (399 aa).

Active-site O-(5'-phospho-DNA)-tyrosine intermediate residues include Tyr-251 and Tyr-255.

This sequence belongs to the microviridae Rep protein family.

It catalyses the reaction ATP + (deoxyribonucleotide)n-3'-hydroxyl + 5'-phospho-(deoxyribonucleotide)m = (deoxyribonucleotide)n+m + AMP + diphosphate.. Plays an essential role in viral DNA replication. Binds the origin of replication and cleaves the dsDNA replicative form I (RFI) and becomes covalently bound to it via phosphotyrosine bond, generating the dsDNA replicative form II (RFII). In turn, viral DNA replication initiates at the 3'-OH of the cleavage site. After one round of rolling circle synthesis, protein ORF4 is linked to the newly synthesized ssDNA and joins the ends of the displaced strand to generate a circular single-stranded molecule ready to be packed into a virion. The polypeptide is Replication-associated protein ORF4 (Chlamydia psittaci (Chlamydophila psittaci)).